Here is a 490-residue protein sequence, read N- to C-terminus: Cytochrome P450 2C12, female-specific (490 aa).

Cys-435 contributes to the heme binding site.

This sequence belongs to the cytochrome P450 family. The cofactor is heme.

Its subcellular location is the endoplasmic reticulum membrane. The protein localises to the microsome membrane. It carries out the reaction an organic molecule + reduced [NADPH--hemoprotein reductase] + O2 = an alcohol + oxidized [NADPH--hemoprotein reductase] + H2O + H(+). In terms of biological role, this P450 is active in 15-beta-hydroxylation of steroid sulfates. The chain is Cytochrome P450 2C12, female-specific (Cyp2c12) from Rattus norvegicus (Rat).